The sequence spans 728 residues: 1,4-alpha-glucan branching enzyme GlgB (728 aa).

Aspartate 405 acts as the Nucleophile in catalysis. The Proton donor role is filled by glutamate 458.

Belongs to the glycosyl hydrolase 13 family. GlgB subfamily. In terms of assembly, monomer.

It catalyses the reaction Transfers a segment of a (1-&gt;4)-alpha-D-glucan chain to a primary hydroxy group in a similar glucan chain.. It functions in the pathway glycan biosynthesis; glycogen biosynthesis. Functionally, catalyzes the formation of the alpha-1,6-glucosidic linkages in glycogen by scission of a 1,4-alpha-linked oligosaccharide from growing alpha-1,4-glucan chains and the subsequent attachment of the oligosaccharide to the alpha-1,6 position. This chain is 1,4-alpha-glucan branching enzyme GlgB, found in Salmonella arizonae (strain ATCC BAA-731 / CDC346-86 / RSK2980).